Reading from the N-terminus, the 136-residue chain is uncharacterized protein (136 aa).

It localises to the mitochondrion. This is an uncharacterized protein from Marchantia polymorpha (Common liverwort).